Here is a 626-residue protein sequence, read N- to C-terminus: Methanol dehydrogenase [cytochrome c] subunit 1 (626 aa).

Residues 1-27 (MSRFVTSVSALAMLALAPAALSSGAYA) form the signal peptide. An intrachain disulfide couples cysteine 130 to cysteine 131. Ca(2+) contacts are provided by glutamate 204 and asparagine 288. Aspartate 330 (proton acceptor) is an active-site residue. Cysteine 413 and cysteine 442 are joined by a disulfide.

Belongs to the bacterial PQQ dehydrogenase family. Heterotetramer composed of 2 alpha and 2 beta subunits. Pyrroloquinoline quinone is required as a cofactor. Ca(2+) serves as cofactor.

It is found in the cell inner membrane. It catalyses the reaction 2 Fe(III)-[cytochrome cL] + a primary alcohol = 2 Fe(II)-[cytochrome cL] + an aldehyde + 2 H(+). Catalyzes the oxidation of primary alcohols including methanol. This Methylorubrum extorquens (strain ATCC 14718 / DSM 1338 / JCM 2805 / NCIMB 9133 / AM1) (Methylobacterium extorquens) protein is Methanol dehydrogenase [cytochrome c] subunit 1 (moxF).